A 492-amino-acid chain; its full sequence is 2-succinylbenzoate--CoA ligase (492 aa).

This sequence belongs to the ATP-dependent AMP-binding enzyme family. MenE subfamily.

It carries out the reaction 2-succinylbenzoate + ATP + CoA = 2-succinylbenzoyl-CoA + AMP + diphosphate. It functions in the pathway quinol/quinone metabolism; 1,4-dihydroxy-2-naphthoate biosynthesis; 1,4-dihydroxy-2-naphthoate from chorismate: step 5/7. Its pathway is quinol/quinone metabolism; menaquinone biosynthesis. Its function is as follows. Converts 2-succinylbenzoate (OSB) to 2-succinylbenzoyl-CoA (OSB-CoA). This is 2-succinylbenzoate--CoA ligase from Staphylococcus aureus (strain USA300 / TCH1516).